An 88-amino-acid chain; its full sequence is Co-chaperonin GroES (88 aa).

This sequence belongs to the GroES chaperonin family. Heptamer of 7 subunits arranged in a ring. Interacts with the chaperonin GroEL.

It is found in the cytoplasm. Together with the chaperonin GroEL, plays an essential role in assisting protein folding. The GroEL-GroES system forms a nano-cage that allows encapsulation of the non-native substrate proteins and provides a physical environment optimized to promote and accelerate protein folding. GroES binds to the apical surface of the GroEL ring, thereby capping the opening of the GroEL channel. The polypeptide is Co-chaperonin GroES (Treponema pallidum (strain Nichols)).